The primary structure comprises 605 residues: NADH-ubiquinone oxidoreductase chain 5 (605 aa).

16 consecutive transmembrane segments (helical) span residues 11 to 31, 49 to 69, 77 to 97, 120 to 140, 141 to 161, 178 to 198, 202 to 222, 244 to 264, 273 to 295, 302 to 322, 325 to 345, 371 to 391, 408 to 425, 457 to 477, 488 to 508, and 584 to 604; these read ILITELLILALSALMTMLPPI, LSLTSILIHILIEEPSSISSL, LAMSIKIDYYSLIFISIALFI, MFLLLFLMSMIMFIAANNFFP, MLVGWGTMGLMSYLLISWWHG, LADIGFILTFSWCITYMSSLD, FFATSTLVTGVPILGMLMAAM, VSALLHSSTMVTAGVYLLIGM, GFSEACLTMGAATALYASFKALL, IIAFSTLSQLGFMMATVGLNH, LAFMHLCMHAFFKAMMFLCAG, ASCFTLSTLALAGFPFLTGFF, LWATMLLISTMFTAIYSL, LALASIVTGSLFSLFTPPIYT, LAALTLTFMSAFLAMYLISLA, and IKTYFMAFLVTFVIILYIMLF.

Belongs to the complex I subunit 5 family.

It localises to the mitochondrion inner membrane. It carries out the reaction a ubiquinone + NADH + 5 H(+)(in) = a ubiquinol + NAD(+) + 4 H(+)(out). Core subunit of the mitochondrial membrane respiratory chain NADH dehydrogenase (Complex I) that is believed to belong to the minimal assembly required for catalysis. Complex I functions in the transfer of electrons from NADH to the respiratory chain. The immediate electron acceptor for the enzyme is believed to be ubiquinone. This Pelomedusa subrufa (African side-necked turtle) protein is NADH-ubiquinone oxidoreductase chain 5 (MT-ND5).